Consider the following 487-residue polypeptide: V-type proton ATPase subunit B3 (487 aa).

This sequence belongs to the ATPase alpha/beta chains family. As to quaternary structure, V-ATPase is a heteromultimeric enzyme composed of a peripheral catalytic V1 complex (components A to H) attached to an integral membrane V0 proton pore complex (components: a, c, c'', d and e).

It localises to the vacuole membrane. In terms of biological role, non-catalytic subunit of the peripheral V1 complex of vacuolar ATPase. V-ATPase is responsible for acidifying a variety of intracellular compartments in eukaryotic cells. The protein is V-type proton ATPase subunit B3 (VHA-B3) of Arabidopsis thaliana (Mouse-ear cress).